The chain runs to 348 residues: Flap endonuclease 1 (348 aa).

The tract at residues 1 to 98 is N-domain; sequence MGLAELRELI…ETLERRRERK (98 aa). Mg(2+)-binding residues include aspartate 28, aspartate 80, glutamate 149, glutamate 151, aspartate 170, aspartate 172, and aspartate 234. The interval 113 to 256 is I-domain; that stretch reads EREKYARQVA…RALQLIRKYG (144 aa). The segment at 340-348 is interaction with PCNA; that stretch reads RQETLDAFF.

This sequence belongs to the XPG/RAD2 endonuclease family. FEN1 subfamily. Interacts with PCNA. PCNA stimulates the nuclease activity without altering cleavage specificity. Mg(2+) serves as cofactor.

Functionally, structure-specific nuclease with 5'-flap endonuclease and 5'-3' exonuclease activities involved in DNA replication and repair. During DNA replication, cleaves the 5'-overhanging flap structure that is generated by displacement synthesis when DNA polymerase encounters the 5'-end of a downstream Okazaki fragment. Binds the unpaired 3'-DNA end and kinks the DNA to facilitate 5' cleavage specificity. Cleaves one nucleotide into the double-stranded DNA from the junction in flap DNA, leaving a nick for ligation. Also involved in the base excision repair (BER) pathway. Acts as a genome stabilization factor that prevents flaps from equilibrating into structures that lead to duplications and deletions. Also possesses 5'-3' exonuclease activity on nicked or gapped double-stranded DNA. The sequence is that of Flap endonuclease 1 from Methanopyrus kandleri (strain AV19 / DSM 6324 / JCM 9639 / NBRC 100938).